The primary structure comprises 194 residues: Histone H1 (194 aa).

Ala1 carries the post-translational modification N-acetylalanine; partial. The segment covering Ala1–Lys14 has biased composition (low complexity). Disordered stretches follow at residues Ala1–Val31 and Ala105–Lys194. Positions Ala15 to Lys26 are enriched in basic residues. The 74-residue stretch at Ser27–Lys100 folds into the H15 domain. Residues Lys116–Lys194 are compositionally biased toward basic residues. Ser145, Ser161, and Ser182 each carry phosphoserine.

This sequence belongs to the histone H1/H5 family.

Its subcellular location is the nucleus. The protein resides in the chromosome. Histones H1 are necessary for the condensation of nucleosome chains into higher-order structures. The chain is Histone H1 from Salmo trutta (Brown trout).